Here is a 213-residue protein sequence, read N- to C-terminus: Phospho-2-dehydro-3-deoxyheptonate aldolase, Tyr-sensitive (213 aa).

It belongs to the class-I DAHP synthase family.

The enzyme catalyses D-erythrose 4-phosphate + phosphoenolpyruvate + H2O = 7-phospho-2-dehydro-3-deoxy-D-arabino-heptonate + phosphate. It functions in the pathway metabolic intermediate biosynthesis; chorismate biosynthesis; chorismate from D-erythrose 4-phosphate and phosphoenolpyruvate: step 1/7. In terms of biological role, stereospecific condensation of phosphoenolpyruvate (PEP) and D-erythrose-4-phosphate (E4P) giving rise to 3-deoxy-D-arabino-heptulosonate-7-phosphate (DAHP). In Enterobacter agglomerans (Erwinia herbicola), this protein is Phospho-2-dehydro-3-deoxyheptonate aldolase, Tyr-sensitive (aroF).